Consider the following 164-residue polypeptide: Urease subunit beta (164 aa).

Composition is skewed to polar residues over residues 1–10 (MSTKTNSTKA) and 20–32 (TNRG…GYSE). A disordered region spans residues 1–32 (MSTKTNSTKATSEKTDSLKTNRGTKSSAGYSE).

Belongs to the urease beta subunit family. Heterotrimer of UreA (gamma), UreB (beta) and UreC (alpha) subunits. Three heterotrimers associate to form the active enzyme.

The protein resides in the cytoplasm. The enzyme catalyses urea + 2 H2O + H(+) = hydrogencarbonate + 2 NH4(+). It functions in the pathway nitrogen metabolism; urea degradation; CO(2) and NH(3) from urea (urease route): step 1/1. The protein is Urease subunit beta of Yersinia enterocolitica serotype O:8 / biotype 1B (strain NCTC 13174 / 8081).